The chain runs to 509 residues: Maturase K (509 aa).

Belongs to the intron maturase 2 family. MatK subfamily.

The protein resides in the plastid. Its subcellular location is the chloroplast. In terms of biological role, usually encoded in the trnK tRNA gene intron. Probably assists in splicing its own and other chloroplast group II introns. This Hottonia palustris (Water-violet) protein is Maturase K.